The sequence spans 140 residues: Transcription antitermination protein NusB (140 aa).

The protein belongs to the NusB family.

Its function is as follows. Involved in transcription antitermination. Required for transcription of ribosomal RNA (rRNA) genes. Binds specifically to the boxA antiterminator sequence of the ribosomal RNA (rrn) operons. The protein is Transcription antitermination protein NusB of Streptococcus pneumoniae serotype 2 (strain D39 / NCTC 7466).